Consider the following 264-residue polypeptide: 3-methyl-2-oxobutanoate hydroxymethyltransferase 1 (264 aa).

Residues D45 and D84 each coordinate Mg(2+). Residues 45–46 (DS), D84, and K112 each bind 3-methyl-2-oxobutanoate. A Mg(2+)-binding site is contributed by E114. Catalysis depends on E181, which acts as the Proton acceptor.

It belongs to the PanB family. Homodecamer; pentamer of dimers. Mg(2+) is required as a cofactor.

It is found in the cytoplasm. The enzyme catalyses 3-methyl-2-oxobutanoate + (6R)-5,10-methylene-5,6,7,8-tetrahydrofolate + H2O = 2-dehydropantoate + (6S)-5,6,7,8-tetrahydrofolate. It functions in the pathway cofactor biosynthesis; (R)-pantothenate biosynthesis; (R)-pantoate from 3-methyl-2-oxobutanoate: step 1/2. Catalyzes the reversible reaction in which hydroxymethyl group from 5,10-methylenetetrahydrofolate is transferred onto alpha-ketoisovalerate to form ketopantoate. The sequence is that of 3-methyl-2-oxobutanoate hydroxymethyltransferase 1 from Aliivibrio fischeri (strain ATCC 700601 / ES114) (Vibrio fischeri).